The primary structure comprises 204 residues: NADH-ubiquinone oxidoreductase subunit 9 (204 aa).

This sequence belongs to the complex I 30 kDa subunit family. In terms of assembly, complex I is composed of about 30 different subunits.

Its subcellular location is the mitochondrion inner membrane. It catalyses the reaction a ubiquinone + NADH + 5 H(+)(in) = a ubiquinol + NAD(+) + 4 H(+)(out). Functionally, core subunit of the mitochondrial membrane respiratory chain NADH dehydrogenase (Complex I) that is believed to belong to the minimal assembly required for catalysis. Complex I functions in the transfer of electrons from NADH to the respiratory chain. The immediate electron acceptor for the enzyme is believed to be ubiquinone. This is NADH-ubiquinone oxidoreductase subunit 9 (NAD9) from Reclinomonas americana.